Consider the following 180-residue polypeptide: Inner membrane-spanning protein YciB (180 aa).

The next 6 membrane-spanning stretches (helical) occupy residues 4-24 (LLSE…GGGI), 25-45 (QSAT…CYII), 49-69 (VSKL…ITLI), 76-96 (IKIK…MSGI), 118-138 (IILS…NEVV), and 150-170 (FKVF…LPLL).

The protein belongs to the YciB family.

The protein resides in the cell inner membrane. Its function is as follows. Plays a role in cell envelope biogenesis, maintenance of cell envelope integrity and membrane homeostasis. This chain is Inner membrane-spanning protein YciB, found in Rickettsia typhi (strain ATCC VR-144 / Wilmington).